We begin with the raw amino-acid sequence, 78 residues long: RNA-binding protein Hfq (78 aa).

Residues 10-69 (DPFLNTLRKEHVPVSIYLVNGIKLQGQIESFDQYVVLLRNTVTQMVYKHAISTVVPARAV) form the Sm domain.

Belongs to the Hfq family. In terms of assembly, homohexamer.

Functionally, RNA chaperone that binds small regulatory RNA (sRNAs) and mRNAs to facilitate mRNA translational regulation in response to envelope stress, environmental stress and changes in metabolite concentrations. Also binds with high specificity to tRNAs. This chain is RNA-binding protein Hfq, found in Bordetella avium (strain 197N).